The following is a 92-amino-acid chain: Large ribosomal subunit protein bL27 (92 aa).

Residues 1 to 20 (MAHKKAGGSTRNGRDSNPKY) are disordered.

The protein belongs to the bacterial ribosomal protein bL27 family.

The chain is Large ribosomal subunit protein bL27 from Legionella pneumophila (strain Paris).